Reading from the N-terminus, the 262-residue chain is Acyl-coenzyme A diphosphatase FITM2 (262 aa).

The Cytoplasmic portion of the chain corresponds to 1–23 (MEHLERCAWVLRGTLVRAAVRRY). The chain crosses the membrane as a helical span at residues 24–44 (LPWALAASMLAGSLLKELSPL). At 45-57 (PESYLSNKRNVLN) the chain is on the lumenal side. Residues 58–78 (VYFVKVAWAWTFCLLLPFIAL) form a helical membrane-spanning segment. Residues 79–93 (TNYHLTGKAGLVLRR) lie on the Cytoplasmic side of the membrane. A helical membrane pass occupies residues 94 to 114 (LSTLLVGTAIWYVCTAIFSNV). Residues 115-145 (EHYTGSCYQSPALEGVRNEPLSKQQCHGQGG) lie on the Lumenal side of the membrane. The chain crosses the membrane as a helical span at residues 146 to 166 (FWHGFDISGHSFLLTFCALMI). Residue histidine 155 is part of the active site. Topologically, residues 167 to 185 (VEEMAVLHEVKTDRSHCLH) are cytoplasmic. A helical transmembrane segment spans residues 186-206 (VAITALVVALGFLTFIWVWMF). Topologically, residues 207–218 (LCTAVYFHNLSQ) are lumenal. Residue histidine 214 is part of the active site. A helical membrane pass occupies residues 219-239 (KVFGTLFGLLGWYGTYGFWYL). Topologically, residues 240 to 262 (KSFSPGLPPQSCSSNLKQDSYKR) are cytoplasmic.

The protein belongs to the FIT family. FIT2 subfamily.

Its subcellular location is the endoplasmic reticulum membrane. It catalyses the reaction an acyl-CoA + H2O = an acyl-4'-phosphopantetheine + adenosine 3',5'-bisphosphate + 2 H(+). The catalysed reaction is (9Z)-octadecenoyl-CoA + H2O = S-(9Z-octadecenoyl)-4'-phosphopantetheine + adenosine 3',5'-bisphosphate + 2 H(+). The enzyme catalyses (5Z,8Z,11Z,14Z)-eicosatetraenoyl-CoA + H2O = S-(5Z,8Z,11Z,14Z-eicosatetraenoyl)-4'-phosphopantetheine + adenosine 3',5'-bisphosphate + 2 H(+). It carries out the reaction hexadecanoyl-CoA + H2O = S-hexadecanoyl-4'-phosphopantetheine + adenosine 3',5'-bisphosphate + 2 H(+). Functionally, fatty acyl-coenzyme A (CoA) diphosphatase that hydrolyzes fatty acyl-CoA to yield acyl-4'-phosphopantetheine and adenosine 3',5'-bisphosphate. Preferentially hydrolyzes unsaturated long-chain acyl-CoA substrates such as oleoyl-CoA/(9Z)-octadecenoyl-CoA and arachidonoyl-CoA/(5Z,8Z,11Z,14Z)-eicosatetraenoyl-CoA in the endoplasmic reticulum (ER) lumen. This catalytic activity is required for maintaining ER structure and for lipid droplets (LDs) biogenesis, which are lipid storage organelles involved in maintaining lipid and energy homeostasis. Directly binds to diacylglycerol (DAGs) and triacylglycerol, which is also important for LD biogenesis. May support directional budding of nacent LDs from the ER into the cytosol by reducing DAG levels at sites of LD formation. Plays a role in the regulation of cell morphology and cytoskeletal organization. The polypeptide is Acyl-coenzyme A diphosphatase FITM2 (Sus scrofa (Pig)).